The chain runs to 202 residues: MKRLLVACCFLSGLISASALADASTDLQNRLSKVNSFHASFSQAVTSSDGAVVQEGEGELWVKRPNLFNWHMTSPDESVLISDGETLWFYNPFVEQATATWLKNATGNTPFMLITRNNPDDWKQYNVKQKGDDFELTPKSASGNLKQFAISVTPSGTIKSFTAVEQDGQRSAYTLKSQQSSVVDASKFTFTPPKGVTLDDQR.

The N-terminal stretch at 1-21 (MKRLLVACCFLSGLISASALA) is a signal peptide.

It belongs to the LolA family. As to quaternary structure, monomer.

The protein localises to the periplasm. Its function is as follows. Participates in the translocation of lipoproteins from the inner membrane to the outer membrane. Only forms a complex with a lipoprotein if the residue after the N-terminal Cys is not an aspartate (The Asp acts as a targeting signal to indicate that the lipoprotein should stay in the inner membrane). This is Outer-membrane lipoprotein carrier protein from Yersinia pestis bv. Antiqua (strain Antiqua).